We begin with the raw amino-acid sequence, 345 residues long: Beta-ketoacyl-[acyl-carrier-protein] synthase III (345 aa).

Residues Cys-114 and His-272 contribute to the active site. Residues 273 to 277 (QANQR) are ACP-binding. The active site involves Asn-302.

It belongs to the thiolase-like superfamily. FabH family. Homodimer.

It is found in the cytoplasm. The catalysed reaction is malonyl-[ACP] + acetyl-CoA + H(+) = 3-oxobutanoyl-[ACP] + CO2 + CoA. It functions in the pathway lipid metabolism; fatty acid biosynthesis. Catalyzes the condensation reaction of fatty acid synthesis by the addition to an acyl acceptor of two carbons from malonyl-ACP. Catalyzes the first condensation reaction which initiates fatty acid synthesis and may therefore play a role in governing the total rate of fatty acid production. Possesses both acetoacetyl-ACP synthase and acetyl transacylase activities. Its substrate specificity determines the biosynthesis of branched-chain and/or straight-chain of fatty acids. The chain is Beta-ketoacyl-[acyl-carrier-protein] synthase III from Rhodopirellula baltica (strain DSM 10527 / NCIMB 13988 / SH1).